The sequence spans 767 residues: 5-methyltetrahydropteroyltriglutamate--homocysteine methyltransferase (767 aa).

Lys19 lines the 5-methyltetrahydropteroyltri-L-glutamate pocket. Ser89 is modified (phosphoserine). Asn126 serves as a coordination point for 5-methyltetrahydropteroyltri-L-glutamate. Ser242 carries the phosphoserine modification. L-homocysteine contacts are provided by residues 444–446 (IGS) and Glu497. L-methionine is bound by residues 444–446 (IGS) and Glu497. Residues Asp502, Tyr525, and 528–529 (RY) each bind 5-methyltetrahydropteroyltri-L-glutamate. Thr566 is subject to Phosphothreonine. Residue Trp574 participates in 5-methyltetrahydropteroyltri-L-glutamate binding. L-homocysteine is bound at residue Asp612. Asp612 serves as a coordination point for L-methionine. Ser629 is subject to Phosphoserine. His655, Cys657, and Glu677 together coordinate Zn(2+). His705 functions as the Proton donor in the catalytic mechanism. Residue Ser706 is modified to Phosphoserine. Zn(2+) is bound at residue Cys737.

It belongs to the vitamin-B12 independent methionine synthase family. The cofactor is Zn(2+).

It catalyses the reaction 5-methyltetrahydropteroyltri-L-glutamate + L-homocysteine = tetrahydropteroyltri-L-glutamate + L-methionine. Its pathway is amino-acid biosynthesis; L-methionine biosynthesis via de novo pathway; L-methionine from L-homocysteine (MetE route): step 1/1. Catalyzes the transfer of a methyl group from 5-methyltetrahydrofolate to homocysteine resulting in methionine formation. The sequence is that of 5-methyltetrahydropteroyltriglutamate--homocysteine methyltransferase (MET6) from Saccharomyces cerevisiae (strain ATCC 204508 / S288c) (Baker's yeast).